The primary structure comprises 427 residues: uncharacterized protein (427 aa).

This is an uncharacterized protein from Human herpesvirus 7 (strain JI) (HHV-7).